We begin with the raw amino-acid sequence, 82 residues long: UPF0180 protein BH2667 (82 aa).

It belongs to the UPF0180 family.

The chain is UPF0180 protein BH2667 from Halalkalibacterium halodurans (strain ATCC BAA-125 / DSM 18197 / FERM 7344 / JCM 9153 / C-125) (Bacillus halodurans).